Here is a 280-residue protein sequence, read N- to C-terminus: Probable endonuclease 4 (280 aa).

Zn(2+) contacts are provided by H69, H109, E145, D179, H182, H216, D229, H231, and E261.

Belongs to the AP endonuclease 2 family. Requires Zn(2+) as cofactor.

The enzyme catalyses Endonucleolytic cleavage to 5'-phosphooligonucleotide end-products.. Endonuclease IV plays a role in DNA repair. It cleaves phosphodiester bonds at apurinic or apyrimidinic (AP) sites, generating a 3'-hydroxyl group and a 5'-terminal sugar phosphate. The protein is Probable endonuclease 4 of Actinobacillus pleuropneumoniae serotype 7 (strain AP76).